The primary structure comprises 643 residues: Ecto-NOX disulfide-thiol exchanger 1 (643 aa).

The RRM domain occupies 142–221 (KTVFVGGLPE…GRLHVDFAQA (80 aa)). Coiled coils occupy residues 307 to 342 (VQSA…LTGI) and 425 to 570 (QAYA…EALL).

Belongs to the ENOX family. Cu cation serves as cofactor. As to expression, expressed in lymphocyte cells, breast and breast cancer (at protein level). Found in the sera of cancer patients with a wide variety of cancers including breast, prostate, lung and ovarian cancers, leukemias, and lymphomas. Found also in the serum of healthy volunteers or patients with disorders other than cancer. Probably shed into serum by cancer cells.

The protein localises to the cell membrane. It is found in the secreted. The protein resides in the extracellular space. Its activity is regulated as follows. Not inhibited by the antitumor sulfonylurea LY181984, the vabilloid capsaicin, and retinoids. Functionally, probably acts as a terminal oxidase of plasma electron transport from cytosolic NAD(P)H via hydroquinones to acceptors at the cell surface. Hydroquinone oxidase activity alternates with a protein disulfide-thiol interchange/oxidoreductase activity which may control physical membrane displacements associated with vesicle budding or cell enlargement. The activities oscillate with a period length of 24 minutes and play a role in control of the ultradian cellular biological clock. The sequence is that of Ecto-NOX disulfide-thiol exchanger 1 (ENOX1) from Homo sapiens (Human).